The primary structure comprises 267 residues: Tryptophan synthase alpha chain (267 aa).

Catalysis depends on proton acceptor residues Glu39 and Asp50.

It belongs to the TrpA family. As to quaternary structure, tetramer of two alpha and two beta chains.

The enzyme catalyses (1S,2R)-1-C-(indol-3-yl)glycerol 3-phosphate + L-serine = D-glyceraldehyde 3-phosphate + L-tryptophan + H2O. Its pathway is amino-acid biosynthesis; L-tryptophan biosynthesis; L-tryptophan from chorismate: step 5/5. Functionally, the alpha subunit is responsible for the aldol cleavage of indoleglycerol phosphate to indole and glyceraldehyde 3-phosphate. This Helicobacter hepaticus (strain ATCC 51449 / 3B1) protein is Tryptophan synthase alpha chain.